The following is a 90-amino-acid chain: UPF0237 protein PAE3582 (90 aa).

In terms of domain architecture, ACT spans 5-74 (VVSVLGADRV…LEEEGKRLGV (70 aa)).

This sequence belongs to the UPF0237 family.

In Pyrobaculum aerophilum (strain ATCC 51768 / DSM 7523 / JCM 9630 / CIP 104966 / NBRC 100827 / IM2), this protein is UPF0237 protein PAE3582.